Here is a 367-residue protein sequence, read N- to C-terminus: NADH-quinone oxidoreductase subunit D (367 aa).

The protein belongs to the complex I 49 kDa subunit family. As to quaternary structure, NDH-1 is composed of 14 different subunits. Subunits NuoB, C, D, E, F, and G constitute the peripheral sector of the complex.

The protein localises to the cell membrane. The enzyme catalyses a quinone + NADH + 5 H(+)(in) = a quinol + NAD(+) + 4 H(+)(out). Its function is as follows. NDH-1 shuttles electrons from NADH, via FMN and iron-sulfur (Fe-S) centers, to quinones in the respiratory chain. The immediate electron acceptor for the enzyme in this species is believed to be ubiquinone. Couples the redox reaction to proton translocation (for every two electrons transferred, four hydrogen ions are translocated across the cytoplasmic membrane), and thus conserves the redox energy in a proton gradient. This is NADH-quinone oxidoreductase subunit D from Dehalococcoides mccartyi (strain ATCC BAA-2100 / JCM 16839 / KCTC 5957 / BAV1).